The chain runs to 516 residues: Radial spoke head protein 3 homolog A (516 aa).

Disordered regions lie at residues 1 to 45 (MAAT…GNPA), 120 to 139 (STLN…AEAS), and 190 to 233 (PTGQ…PVEG). Over residues 12-25 (AKKRPLHQRARRPA) the composition is skewed to basic residues. Over residues 120-129 (STLNQASAMT) the composition is skewed to polar residues. The span at 208–217 (QARRRALARK) shows a compositional bias: basic residues. Residues 218-233 (RAQEQLKPRTPEPVEG) show a composition bias toward basic and acidic residues. T270 bears the Phosphothreonine; by MAPK1 mark. Residues 333–369 (YEEIRNVELAEVQRLEEQERRHREEKERRKKQQWEIV) are a coiled coil. Residues 459-516 (EAMPPGQKTNVINGPNTVTDPSVTTLHTQKPVLDRVSSQPAPSQERKPVEEGGHLMAE) form a disordered region. The segment covering 465 to 486 (QKTNVINGPNTVTDPSVTTLHT) has biased composition (polar residues). Residues 502–516 (QERKPVEEGGHLMAE) are compositionally biased toward basic and acidic residues.

It belongs to the flagellar radial spoke RSP3 family. As to quaternary structure, may be a component of axonemal radial spokes. Interacts with IQUB. Interacts with phosphorylated MAPK1. Interacts with MEK1. Interacts with PKA regulatory subunits PRKAR1A and PRKAR1B. Interacts with RSPH1. Interacts with RSPH4A. Interacts with RSPH6A. Interacts with RSPH9. Interacts with CFAP61. Interacts with LRRC23.

Its subcellular location is the cytoplasm. The protein resides in the cytoskeleton. It is found in the cilium axoneme. It localises to the flagellum axoneme. In terms of biological role, may function as part of axonemal radial spoke complexes that play an important part in the motility of sperm and cilia. Functions as a protein kinase A-anchoring protein that scaffolds the cAMP-dependent protein kinase holoenzyme. May serve as a point of convergence for MAPK and PKA signaling in cilia. The polypeptide is Radial spoke head protein 3 homolog A (Rsph3a) (Mus musculus (Mouse)).